A 167-amino-acid polypeptide reads, in one-letter code: Large ribosomal subunit protein uL10 (167 aa).

Belongs to the universal ribosomal protein uL10 family. In terms of assembly, part of the ribosomal stalk of the 50S ribosomal subunit. The N-terminus interacts with L11 and the large rRNA to form the base of the stalk. The C-terminus forms an elongated spine to which L12 dimers bind in a sequential fashion forming a multimeric L10(L12)X complex.

Forms part of the ribosomal stalk, playing a central role in the interaction of the ribosome with GTP-bound translation factors. The sequence is that of Large ribosomal subunit protein uL10 from Dichelobacter nodosus (strain VCS1703A).